Here is a 568-residue protein sequence, read N- to C-terminus: Proline--tRNA ligase (568 aa).

It belongs to the class-II aminoacyl-tRNA synthetase family. ProS type 1 subfamily. As to quaternary structure, homodimer.

The protein localises to the cytoplasm. It catalyses the reaction tRNA(Pro) + L-proline + ATP = L-prolyl-tRNA(Pro) + AMP + diphosphate. Functionally, catalyzes the attachment of proline to tRNA(Pro) in a two-step reaction: proline is first activated by ATP to form Pro-AMP and then transferred to the acceptor end of tRNA(Pro). As ProRS can inadvertently accommodate and process non-cognate amino acids such as alanine and cysteine, to avoid such errors it has two additional distinct editing activities against alanine. One activity is designated as 'pretransfer' editing and involves the tRNA(Pro)-independent hydrolysis of activated Ala-AMP. The other activity is designated 'posttransfer' editing and involves deacylation of mischarged Ala-tRNA(Pro). The misacylated Cys-tRNA(Pro) is not edited by ProRS. This is Proline--tRNA ligase from Macrococcus caseolyticus (strain JCSC5402) (Macrococcoides caseolyticum).